Here is a 99-residue protein sequence, read N- to C-terminus: DNA-binding protein HU (99 aa).

Belongs to the bacterial histone-like protein family. As to quaternary structure, homodimer.

Functionally, histone-like DNA-binding protein which is capable of wrapping DNA to stabilize it, and thus to prevent its denaturation under extreme environmental conditions. The polypeptide is DNA-binding protein HU (hup) (Rickettsia typhi (strain ATCC VR-144 / Wilmington)).